A 72-amino-acid chain; its full sequence is Mitotic-spindle organizing protein 1 (72 aa).

It belongs to the MOZART1 family. In terms of assembly, part of the gamma-tubulin complex.

The protein localises to the cytoplasm. It is found in the cytoskeleton. The protein resides in the microtubule organizing center. Its subcellular location is the spindle pole body. Its function is as follows. Required for gamma-tubulin complex recruitment to the microtubule organizing center (MTOC). The sequence is that of Mitotic-spindle organizing protein 1 from Coccidioides immitis (strain RS) (Valley fever fungus).